The following is a 300-amino-acid chain: Diphthine methyl ester synthase (300 aa).

S-adenosyl-L-methionine-binding positions include Leu9, Asp85, Gly88, 113 to 114 (SV), Leu164, Leu222, and His247.

The protein belongs to the diphthine synthase family.

The protein localises to the cytoplasm. The catalysed reaction is 2-[(3S)-amino-3-carboxypropyl]-L-histidyl-[translation elongation factor 2] + 4 S-adenosyl-L-methionine = diphthine methyl ester-[translation elongation factor 2] + 4 S-adenosyl-L-homocysteine + 3 H(+). The protein operates within protein modification; peptidyl-diphthamide biosynthesis. Its function is as follows. S-adenosyl-L-methionine-dependent methyltransferase that catalyzes four methylations of the modified target histidine residue in translation elongation factor 2 (EF-2), to form an intermediate called diphthine methyl ester. The four successive methylation reactions represent the second step of diphthamide biosynthesis. The sequence is that of Diphthine methyl ester synthase (DPH5) from Yarrowia lipolytica (strain CLIB 122 / E 150) (Yeast).